The following is a 340-amino-acid chain: tRNA N6-adenosine threonylcarbamoyltransferase (340 aa).

Residues His-115 and His-119 each contribute to the Fe cation site. Substrate-binding positions include Ile-137–Gly-141, Asp-170, Gly-183, Asp-187, and Asn-276. Asp-304 contributes to the Fe cation binding site.

It belongs to the KAE1 / TsaD family. It depends on Fe(2+) as a cofactor.

Its subcellular location is the cytoplasm. It catalyses the reaction L-threonylcarbamoyladenylate + adenosine(37) in tRNA = N(6)-L-threonylcarbamoyladenosine(37) in tRNA + AMP + H(+). Functionally, required for the formation of a threonylcarbamoyl group on adenosine at position 37 (t(6)A37) in tRNAs that read codons beginning with adenine. Is involved in the transfer of the threonylcarbamoyl moiety of threonylcarbamoyl-AMP (TC-AMP) to the N6 group of A37, together with TsaE and TsaB. TsaD likely plays a direct catalytic role in this reaction. This Staphylococcus epidermidis (strain ATCC 35984 / DSM 28319 / BCRC 17069 / CCUG 31568 / BM 3577 / RP62A) protein is tRNA N6-adenosine threonylcarbamoyltransferase.